Here is a 78-residue protein sequence, read N- to C-terminus: MSPVAGAKFVRTPLQLYRYLLRCCRLLPSEAMQKHYQHAIRQSYNSHVDEDDPQRIQMIIQRAISDADWILNKYTKKK.

It belongs to the complex I LYR family. LYRM9 subfamily.

This Danio rerio (Zebrafish) protein is LYR motif-containing protein 9 (lyrm9).